A 503-amino-acid polypeptide reads, in one-letter code: Angiopoietin-4 (503 aa).

A signal peptide spans 1 to 24 (MLSQLAMLQGSLLLVVATMSVAQQ). Positions 84–238 (TQQVKQLEQA…RQSAALTNIE (155 aa)) form a coiled coil. Residues asparagine 96, asparagine 126, asparagine 140, asparagine 158, asparagine 247, asparagine 274, asparagine 311, asparagine 337, and asparagine 427 are each glycosylated (N-linked (GlcNAc...) asparagine). The Fibrinogen C-terminal domain occupies 282–502 (MAGEQVFQDC…ASRMMIRPLD (221 aa)). Cysteine 291 and cysteine 320 are oxidised to a cystine. A disulfide bond links cysteine 444 and cysteine 457.

Homodimer; disulfide-linked. Interacts with TEK/TIE2. In terms of tissue distribution, highly expressed in the lung with much lower levels found in other tissues.

It localises to the secreted. Functionally, binds to TEK/TIE2, modulating ANGPT1 signaling. Can induce tyrosine phosphorylation of TEK/TIE2. Promotes endothelial cell survival, migration and angiogenesis. The sequence is that of Angiopoietin-4 (ANGPT4) from Homo sapiens (Human).